We begin with the raw amino-acid sequence, 160 residues long: Bcl-2-like gene 16 protein (160 aa).

The short motif at 64 to 84 is the BH1 element; the sequence is LLTTEHTTNWGKVVAMLSFSA.

Belongs to the Bcl-2 family.

The sequence is that of Bcl-2-like gene 16 protein (16) from Saimiri sciureus (Common squirrel monkey).